The chain runs to 178 residues: Dual-action ribosomal maturation protein DarP (178 aa).

The protein belongs to the DarP family.

It localises to the cytoplasm. In terms of biological role, member of a network of 50S ribosomal subunit biogenesis factors which assembles along the 30S-50S interface, preventing incorrect 23S rRNA structures from forming. Promotes peptidyl transferase center (PTC) maturation. The protein is Dual-action ribosomal maturation protein DarP of Haemophilus influenzae (strain 86-028NP).